We begin with the raw amino-acid sequence, 309 residues long: Ribosomal protein L11 methyltransferase (309 aa).

The S-adenosyl-L-methionine site is built by T160, G181, D203, and N245.

The protein belongs to the methyltransferase superfamily. PrmA family.

The protein resides in the cytoplasm. It carries out the reaction L-lysyl-[protein] + 3 S-adenosyl-L-methionine = N(6),N(6),N(6)-trimethyl-L-lysyl-[protein] + 3 S-adenosyl-L-homocysteine + 3 H(+). Methylates ribosomal protein L11. The chain is Ribosomal protein L11 methyltransferase from Caldanaerobacter subterraneus subsp. tengcongensis (strain DSM 15242 / JCM 11007 / NBRC 100824 / MB4) (Thermoanaerobacter tengcongensis).